The primary structure comprises 504 residues: Dolichol kinase sec59 (504 aa).

Topologically, residues 1 to 55 are cytoplasmic; sequence MYIMSKKCYDTSEKIDREQECVEVNYQHRNFESILEIFSVLFIPFLCNSGKKFLQ. Residues 56–76 form a helical membrane-spanning segment; the sequence is ISNASFFLPACFYLLGSSSII. Residue Gln77 is a topological domain, lumenal. A helical transmembrane segment spans residues 78–98; that stretch reads LYEPLLWLSSFPFCILYVGFG. The Cytoplasmic segment spans residues 99 to 157; the sequence is ENSVLYHEMYTVCLYNALLSLTQRWKWLSIVLDGLGNSSVNLKLHETVILAFLEITQNS. A helical transmembrane segment spans residues 158–178; the sequence is FTFIEGILICTGLTGLCFATF. Residues 179–187 lie on the Lumenal side of the membrane; the sequence is SYEVSPVVS. The helical transmembrane segment at 188–208 threads the bilayer; sequence VLSGVLLISLPTLILLNLCIL. At 209-215 the chain is on the cytoplasmic side; sequence KLAAKLH. A helical transmembrane segment spans residues 216–236; sequence LSALFTTCLIYFFSALLVFLV. Over 237–263 the chain is Lumenal; it reads SRSWVAGQLGQAPEVWLFNQIFSHRNS. Residues 264-284 form a helical membrane-spanning segment; sequence LTRIKIIIWWIICLGCFIFIL. Topologically, residues 285–325 are cytoplasmic; that stretch reads LRSNRNNPLGKYFTTEDEVLNFRRKTYHALVVFLFLPVCCL. Residues 326–347 traverse the membrane as a helical segment; the sequence is DPHFLHLSFSGVLFIFLFVEGI. The Lumenal segment spans residues 348-373; sequence RILRLKPFGKMIHEFLWEYTDNRDHK. A helical transmembrane segment spans residues 374-394; that stretch reads GPLIISHIYLLIGCAIPIWLS. Over 395–403 the chain is Cytoplasmic; that stretch reads NALKGPVAS. A helical transmembrane segment spans residues 404 to 424; that stretch reads VELLVGVLCLGCGDSMASIIG. At 425–440 the chain is on the lumenal side; it reads KRFGKHRISKTNKSIE. A helical membrane pass occupies residues 441–461; sequence GVFAFSISVFLVLHLTQAFHV. Residue Cys462 is a topological domain, cytoplasmic. The chain crosses the membrane as a helical span at residues 463–483; it reads PSVTFWKTLFMSLCTAILEGV. The Lumenal portion of the chain corresponds to 484 to 504; sequence STENDNLILPMYMWVLYQALD.

The protein belongs to the polyprenol kinase family.

It is found in the endoplasmic reticulum membrane. It carries out the reaction a di-trans,poly-cis-dolichol + CTP = a di-trans,poly-cis-dolichyl phosphate + CDP + H(+). It functions in the pathway protein modification; protein glycosylation. In terms of biological role, catalyzes CTP-mediated phosphorylation of dolichol, the terminal step in de novo dolichyl monophosphate (Dol-P) biosynthesis. Dol-P is a lipid carrier essential for the synthesis of N-linked and O-linked oligosaccharides and for GPI anchors. The chain is Dolichol kinase sec59 from Schizosaccharomyces pombe (strain 972 / ATCC 24843) (Fission yeast).